The following is a 769-amino-acid chain: Endothelin-converting enzyme 1 (769 aa).

Over 1 to 67 the chain is Cytoplasmic; it reads MRTVWSPLAA…WAARTSVEKR (67 aa). Threonine 24 is modified (phosphothreonine). The helical; Signal-anchor for type II membrane protein transmembrane segment at 68-88 threads the bilayer; sequence LVVLVTLLAAGLVACLAALGI. Topologically, residues 89–769 are extracellular; that stretch reads QYQTRTPPVC…MNPHHKCEVW (681 aa). Residues 97-769 form the Peptidase M13 domain; sequence VCLTEACVSV…MNPHHKCEVW (673 aa). 5 disulfides stabilise this stretch: cysteine 98/cysteine 103, cysteine 121/cysteine 754, cysteine 129/cysteine 714, cysteine 184/cysteine 434, and cysteine 643/cysteine 766. N-linked (GlcNAc...) asparagine glycosylation is found at asparagine 165, asparagine 186, asparagine 209, asparagine 269, asparagine 315, asparagine 361, asparagine 382, and asparagine 538. Histidine 606 contributes to the Zn(2+) binding site. Glutamate 607 is an active-site residue. Histidine 610 provides a ligand contact to Zn(2+). N-linked (GlcNAc...) asparagine glycans are attached at residues asparagine 631 and asparagine 650. Glutamate 666 is a Zn(2+) binding site. The Proton donor role is filled by aspartate 670.

The protein belongs to the peptidase M13 family. Homodimer; disulfide-linked. Interacts with PPP1R16B. Interacts with TSPAN8; this interaction recruits the endothelin converting enzyme ECE1 to tetraspanin-enriched microdomains and positively modulates its enzymatic activity. The cofactor is Zn(2+).

It is found in the cell membrane. It carries out the reaction Hydrolysis of the 21-Trp-|-Val-22 bond in big endothelin to form endothelin 1.. Inhibited by phosphoramidon. Its function is as follows. Converts big endothelin-1 to endothelin-1. This chain is Endothelin-converting enzyme 1 (Ece1), found in Mus musculus (Mouse).